The sequence spans 103 residues: Small ribosomal subunit protein uS14c (103 aa).

This sequence belongs to the universal ribosomal protein uS14 family. As to quaternary structure, part of the 30S ribosomal subunit.

It localises to the plastid. Its subcellular location is the chloroplast. Its function is as follows. Binds 16S rRNA, required for the assembly of 30S particles. The polypeptide is Small ribosomal subunit protein uS14c (Agrostis stolonifera (Creeping bentgrass)).